The sequence spans 396 residues: Cytochrome b (396 aa).

The next 4 helical transmembrane spans lie at Phe37–Met57, Trp81–Ile102, Trp117–Leu137, and Phe182–Met202. Heme b contacts are provided by His87 and His101. Residues His186 and His200 each coordinate heme b. Residue His205 participates in a ubiquinone binding. 4 helical membrane passes run Phe230–Ala250, Leu292–His312, Leu324–Gly344, and Phe351–Pro371.

This sequence belongs to the cytochrome b family. In terms of assembly, the cytochrome bc1 complex contains 3 respiratory subunits (MT-CYB, CYC1 and UQCRFS1), 2 core proteins (UQCRC1 and UQCRC2) and probably 6 low-molecular weight proteins. Heme b is required as a cofactor.

The protein resides in the mitochondrion inner membrane. Component of the ubiquinol-cytochrome c reductase complex (complex III or cytochrome b-c1 complex) that is part of the mitochondrial respiratory chain. The b-c1 complex mediates electron transfer from ubiquinol to cytochrome c. Contributes to the generation of a proton gradient across the mitochondrial membrane that is then used for ATP synthesis. The polypeptide is Cytochrome b (mt-cyb) (Petromyzon marinus (Sea lamprey)).